The following is a 267-amino-acid chain: Cyclin-C (267 aa).

Residues 48-151 form the Cyclin N-terminal domain; the sequence is IQVLGEQLKL…LLENLDCCLI (104 aa).

This sequence belongs to the cyclin family. Cyclin C subfamily. In terms of assembly, component of the Cdk8 module of the Mediator complex.

It is found in the nucleus. Its function is as follows. Component of the Mediator complex, a coactivator involved in regulated gene transcription of nearly all RNA polymerase II-dependent genes. Mediator functions as a bridge to convey information from gene-specific regulatory proteins to the basal RNA polymerase II transcription machinery. Mediator is recruited to promoters by direct interactions with regulatory proteins and serves as a scaffold for the assembly of a functional preinitiation complex with RNA polymerase II and the general transcription factors. Binds to and activates cyclin-dependent kinase Cdk8 that phosphorylates the CTD (C-terminal domain) of the large subunit of RNA polymerase II (RNAp II), which may inhibit the formation of a transcription initiation complex. The sequence is that of Cyclin-C (CycC) from Drosophila pseudoobscura pseudoobscura (Fruit fly).